Reading from the N-terminus, the 212-residue chain is Octanoyltransferase (212 aa).

The BPL/LPL catalytic domain maps to G34–C208. Residues R72–H79, S139–G141, and G152–S154 each bind substrate. Catalysis depends on C170, which acts as the Acyl-thioester intermediate.

Belongs to the LipB family.

The protein resides in the cytoplasm. It catalyses the reaction octanoyl-[ACP] + L-lysyl-[protein] = N(6)-octanoyl-L-lysyl-[protein] + holo-[ACP] + H(+). It functions in the pathway protein modification; protein lipoylation via endogenous pathway; protein N(6)-(lipoyl)lysine from octanoyl-[acyl-carrier-protein]: step 1/2. Its function is as follows. Catalyzes the transfer of endogenously produced octanoic acid from octanoyl-acyl-carrier-protein onto the lipoyl domains of lipoate-dependent enzymes. Lipoyl-ACP can also act as a substrate although octanoyl-ACP is likely to be the physiological substrate. In Magnetococcus marinus (strain ATCC BAA-1437 / JCM 17883 / MC-1), this protein is Octanoyltransferase.